Reading from the N-terminus, the 29-residue chain is Cytolysin Oshem 1 (29 aa).

The protein resides in the secreted. It is found in the nematocyst. It localises to the target cell membrane. Functionally, cytolysin that shows moderate hemolysis and moderate myonecrosis. The polypeptide is Cytolysin Oshem 1 (Olindias sambaquiensis (Hydromedusa)).